The sequence spans 705 residues: Protein arginine N-methyltransferase 7 (705 aa).

2 SAM-dependent MTase PRMT-type domains span residues 29–372 (QNSW…YSLW) and 381–705 (TKSV…QKKL).

The protein belongs to the class I-like SAM-binding methyltransferase superfamily. Protein arginine N-methyltransferase family. PRMT7 subfamily.

Essential arginine methyltransferase that can both catalyze the formation of omega-N monomethylarginine (MMA) and symmetrical dimethylarginine (sDMA). Specifically mediates the symmetrical dimethylation of arginine residues in the small nuclear ribonucleoproteins SmD1 and SmD3. The sequence is that of Protein arginine N-methyltransferase 7 (Art7) from Drosophila simulans (Fruit fly).